The chain runs to 348 residues: Protein pof5 (348 aa).

The protein to yeast YDR306C. As to quaternary structure, interacts with skp1.

Its subcellular location is the mitochondrion. In Schizosaccharomyces pombe (strain 972 / ATCC 24843) (Fission yeast), this protein is Protein pof5 (pof5).